Reading from the N-terminus, the 101-residue chain is Small ribosomal subunit protein uS14 (101 aa).

This sequence belongs to the universal ribosomal protein uS14 family. As to quaternary structure, part of the 30S ribosomal subunit. Contacts proteins S3 and S10.

In terms of biological role, binds 16S rRNA, required for the assembly of 30S particles and may also be responsible for determining the conformation of the 16S rRNA at the A site. The polypeptide is Small ribosomal subunit protein uS14 (Haemophilus ducreyi (strain 35000HP / ATCC 700724)).